We begin with the raw amino-acid sequence, 529 residues long: Zinc finger protein 572 (529 aa).

Residues Met1–Ser125 are disordered. Lys6 participates in a covalent cross-link: Glycyl lysine isopeptide (Lys-Gly) (interchain with G-Cter in SUMO2). Polar residues predominate over residues Lys22–Ser42. Residues Lys43–Glu68 show a composition bias toward basic and acidic residues. Positions Asn87–Asn96 are enriched in polar residues. C2H2-type zinc fingers lie at residues Tyr131 to His153, Tyr159 to His181, Tyr187 to His209, Tyr215 to His237, Tyr243 to His265, Tyr271 to His293, Tyr299 to His321, Tyr327 to His349, Tyr383 to His405, Tyr411 to His433, Tyr439 to His461, and Tyr467 to His489.

This sequence belongs to the krueppel C2H2-type zinc-finger protein family.

Its subcellular location is the nucleus. In terms of biological role, may be involved in transcriptional regulation. The chain is Zinc finger protein 572 (ZNF572) from Bos taurus (Bovine).